A 319-amino-acid polypeptide reads, in one-letter code: 3'-5' exoribonuclease YhaM (319 aa).

A DNA-binding region (OB) is located at residues 12–90 (EAVDGYLLIK…QLKIASIRPT (79 aa)). The HD domain occupies 163 to 279 (HVVSMLRIGK…LHLIDNIDAK (117 aa)).

Belongs to the YhaM family.

In terms of biological role, shows a 3'-5' exoribonuclease activity. The chain is 3'-5' exoribonuclease YhaM from Shouchella clausii (strain KSM-K16) (Alkalihalobacillus clausii).